We begin with the raw amino-acid sequence, 608 residues long: ATP-citrate synthase beta chain protein 1 (608 aa).

ATP contacts are provided by residues 214–234 (ILRF…ELGG) and 265–291 (FKSE…KNQA). A Mg(2+)-binding site is contributed by E231. H273 serves as the catalytic Tele-phosphohistidine intermediate. 292–302 (LKDAGAVVPTS) is a CoA binding site.

This sequence belongs to the succinate/malate CoA ligase alpha subunit family. In terms of assembly, heterooctamer of 4 alpha and 4 beta chains.

The protein resides in the cytoplasm. It is found in the cytosol. The catalysed reaction is oxaloacetate + acetyl-CoA + ADP + phosphate = citrate + ATP + CoA. In terms of biological role, ATP citrate-lyase is the primary enzyme responsible for the synthesis of cytosolic acetyl-CoA, used for the elongation of fatty acids and biosynthesis of isoprenoids, flavonoids and malonated derivatives. May supply substrate to the cytosolic acetyl-CoA carboxylase, which generates the malonyl-CoA used for the synthesis of a multitude of compounds, including very long chain fatty acids and flavonoids. In contrast to all known animal ACL enzymes having a homomeric structure, plant ACLs are composed of alpha and beta chains. This is ATP-citrate synthase beta chain protein 1 (ACLB-1) from Oryza sativa subsp. japonica (Rice).